Reading from the N-terminus, the 196-residue chain is Probable thymidylate kinase (196 aa).

9-16 (GIDGSGKT) contributes to the ATP binding site.

This sequence belongs to the thymidylate kinase family.

The enzyme catalyses dTMP + ATP = dTDP + ADP. This chain is Probable thymidylate kinase, found in Methanococcus aeolicus (strain ATCC BAA-1280 / DSM 17508 / OCM 812 / Nankai-3).